Here is a 230-residue protein sequence, read N- to C-terminus: Transmembrane protein 221 (230 aa).

The next 4 membrane-spanning stretches (helical) occupy residues 12-32 (AMTLLGIPAAVLVALAAQLLF), 73-93 (ALAALAQVLGLSCLLLAALCG), 125-145 (LFCCGVSVYLAALAIYALLLF), and 147-167 (IEAGAAAASILGSGALILVAI). Positions 184–230 (RELSPPSFEDEPARPSEDSKSGCRAQPPQDEETETPIGAVTHQGSHF) are disordered. The segment covering 194 to 204 (EPARPSEDSKS) has biased composition (basic and acidic residues).

It is found in the membrane. This is Transmembrane protein 221 (Tmem221) from Mus musculus (Mouse).